Here is a 144-residue protein sequence, read N- to C-terminus: Large ribosomal subunit protein uL11 (144 aa).

The protein belongs to the universal ribosomal protein uL11 family. In terms of assembly, part of the ribosomal stalk of the 50S ribosomal subunit. Interacts with L10 and the large rRNA to form the base of the stalk. L10 forms an elongated spine to which L12 dimers bind in a sequential fashion forming a multimeric L10(L12)X complex. Post-translationally, one or more lysine residues are methylated.

Functionally, forms part of the ribosomal stalk which helps the ribosome interact with GTP-bound translation factors. This is Large ribosomal subunit protein uL11 from Legionella pneumophila (strain Paris).